We begin with the raw amino-acid sequence, 103 residues long: Histone H4 (103 aa).

The disordered stretch occupies residues 1–32 (MNTQSIGAKGKSKAAKGIAKRHRKQSSLSDSI). Residues 10-25 (GKSKAAKGIAKRHRKQ) show a composition bias toward basic residues. Lysine 16 bears the N6-acetyl-N6-methyllysine; alternate mark. Lysine 16 carries the post-translational modification N6-methyllysine; alternate. A DNA-binding region spans residues 20 to 24 (KRHRK). Lysine 94 carries the post-translational modification N6-glutaryllysine.

This sequence belongs to the histone H4 family. The nucleosome is a histone octamer containing two molecules each of H2A, H2B, H3 and H4 assembled in one H3-H4 heterotetramer and two H2A-H2B heterodimers. The octamer wraps approximately 147 bp of DNA. In terms of processing, glutarylation at Lys-94 (H4K91glu) destabilizes nucleosomes by promoting dissociation of the H2A-H2B dimers from nucleosomes.

It is found in the nucleus. The protein resides in the chromosome. Core component of nucleosome. Nucleosomes wrap and compact DNA into chromatin, limiting DNA accessibility to the cellular machineries which require DNA as a template. Histones thereby play a central role in transcription regulation, DNA repair, DNA replication and chromosomal stability. DNA accessibility is regulated via a complex set of post-translational modifications of histones, also called histone code, and nucleosome remodeling. This chain is Histone H4 (HHF1), found in Encephalitozoon cuniculi (strain GB-M1) (Microsporidian parasite).